The primary structure comprises 155 residues: Large ribosomal subunit protein uL22c (155 aa).

Belongs to the universal ribosomal protein uL22 family. Part of the 50S ribosomal subunit.

It localises to the plastid. The protein localises to the chloroplast. Functionally, this protein binds specifically to 23S rRNA. Its function is as follows. The globular domain of the protein is located near the polypeptide exit tunnel on the outside of the subunit, while an extended beta-hairpin is found that lines the wall of the exit tunnel in the center of the 70S ribosome. This is Large ribosomal subunit protein uL22c (rpl22) from Atropa belladonna (Belladonna).